The chain runs to 1040 residues: Multidrug resistance protein MdtB (1040 aa).

Transmembrane regions (helical) follow at residues 25–45, 347–367, 369–389, 396–416, 440–460, 472–492, 537–557, 863–883, 888–908, 910–930, 968–988, and 998–1018; these read LLMA…PVAA, LMLA…NIPA, IIPG…MVFL, LTLM…IVVI, IGFT…PLLF, FAVT…TLTP, WLTL…WIVI, LGST…VLGV, FIHP…ALLA, IIAG…LIGI, ILMT…STGV, and IAMV…TPVI.

This sequence belongs to the resistance-nodulation-cell division (RND) (TC 2.A.6) family. MdtB subfamily. In terms of assembly, part of a tripartite efflux system composed of MdtA, MdtB and MdtC. MdtB forms a heteromultimer with MdtC.

It localises to the cell inner membrane. The protein is Multidrug resistance protein MdtB of Salmonella gallinarum (strain 287/91 / NCTC 13346).